A 970-amino-acid chain; its full sequence is Type III restriction-modification enzyme EcoPI Res subunit (970 aa).

Residues 75 to 540 (ARSNVIDVSM…EVGRGLRLPV (466 aa)) are helicase-like domain. Positions 894-918 (TYSPDFAYVVKTAEGDYLNFIIETK) are endonuclease domain.

This sequence belongs to the type III restriction-modification system Res protein family. A heterotetramer with stoichiometry Res(2)Mod(2). Mg(2+) serves as cofactor. It depends on S-adenosyl-L-methionine as a cofactor.

It catalyses the reaction Endonucleolytic cleavage of DNA to give specific double-stranded fragments with terminal 5'-phosphates.. Its function is as follows. A type III restriction enzyme that recognizes 2 inversely oriented double-stranded sequences 5'-AGACC-3' and cleaves DNA 25-27 base pairs downstream of one site, producing a single-strand 5' protrusion of two nucleotides. DNA restriction requires both the Res and Mod subunits. DNA topology affects its action; relaxed and negatively supercoiled DNA are digested but positively supercoiled DNA is not a good substrate. After binding to one recognition site undergoes random one-dimensional diffusion along DNA until it collides with a stationary enzyme bound to the second DNA site, which is when DNA cleavage occurs. This chain is Type III restriction-modification enzyme EcoPI Res subunit, found in Enterobacteriaceae (Bacteriophage P1).